Here is a 235-residue protein sequence, read N- to C-terminus: MNHLPEHMENTLTGSQSSHASLRDIHSINPAQLMARIESYEGREKKGISDVRRTFCLFVTFDLLFVTLLWIIELNVNGGIENTLKKEVIHYDYYSSYFDIFLLAVFRFKVLILGYAVCRLRHWWAIALTTAVTSAFLLAKVILSKLFSQGAFGYVLPIISFILAWIETWFLDFKVLPQEAEEENRLLLVQDASERAALIPAGLSDGQFYSPPESEAGSEEEAEEKQESEKPLLEL.

At M1 the chain carries N-acetylmethionine. The tract at residues 1 to 20 (MNHLPEHMENTLTGSQSSHA) is disordered. At 1 to 53 (MNHLPEHMENTLTGSQSSHASLRDIHSINPAQLMARIESYEGREKKGISDVRR) the chain is on the cytoplasmic side. A compositionally biased stretch (polar residues) spans 10–20 (NTLTGSQSSHA). Phosphoserine is present on residues S15, S21, and S27. One can recognise an MENTAL domain in the interval 48 to 218 (ISDVRRTFCL…YSPPESEAGS (171 aa)). Residues 54 to 74 (TFCLFVTFDLLFVTLLWIIEL) form a helical membrane-spanning segment. Topologically, residues 75-97 (NVNGGIENTLKKEVIHYDYYSSY) are extracellular. The helical transmembrane segment at 98–118 (FDIFLLAVFRFKVLILGYAVC) threads the bilayer. Topologically, residues 119 to 122 (RLRH) are cytoplasmic. The chain crosses the membrane as a helical span at residues 123 to 143 (WWAIALTTAVTSAFLLAKVIL). Over 144 to 150 (SKLFSQG) the chain is Extracellular. The helical transmembrane segment at 151 to 171 (AFGYVLPIISFILAWIETWFL) threads the bilayer. At 172–235 (DFKVLPQEAE…QESEKPLLEL (64 aa)) the chain is on the cytoplasmic side. S193 carries the post-translational modification Phosphoserine. The interval 202-235 (GLSDGQFYSPPESEAGSEEEAEEKQESEKPLLEL) is disordered. Positions 208–213 (FYSPPE) match the FFAT motif. The span at 225–235 (KQESEKPLLEL) shows a compositional bias: basic and acidic residues.

Belongs to the STARD3 family. In terms of assembly, homodimer. Interacts (via the MENTAL domain) with STARD3NL. Interacts (via FFAT motif) with VAPA. Interacts (via FFAT motif) with VAPB. Interacts (via FFAT motif) with MOSPD2 (via MSP domain).

The protein resides in the late endosome membrane. In terms of biological role, tethering protein that creates contact site between the endoplasmic reticulum and late endosomes: localizes to late endosome membranes and contacts the endoplasmic reticulum via interaction with VAPA and VAPB. The protein is STARD3 N-terminal-like protein of Mus musculus (Mouse).